Here is a 228-residue protein sequence, read N- to C-terminus: Glucose-induced degradation protein 8 homolog (228 aa).

The 33-residue stretch at Ser29–Thr61 folds into the LisH domain. A CTLH domain is found at Ser67 to Glu124.

Belongs to the GID8 family.

The protein resides in the cytoplasm. Its subcellular location is the nucleus. Functionally, core component of the CTLH E3 ubiquitin-protein ligase complex that mediates ubiquitination and subsequent proteasomal degradation of target proteins. Acts as a positive regulator of Wnt signaling pathway by promoting beta-catenin (CTNNB1) nuclear accumulation. This chain is Glucose-induced degradation protein 8 homolog, found in Dictyostelium discoideum (Social amoeba).